The sequence spans 475 residues: Protein EARLY HEADING DATE 2 (475 aa).

Residues 1 to 16 (MLLSDLSSDQEATGSN) show a composition bias toward polar residues. The disordered stretch occupies residues 1–26 (MLLSDLSSDQEATGSNSHGGGGGDRM). 2 C2H2-type zinc fingers span residues 105–127 (FVCEVCNKGFQRDQNLQLHRRGH) and 155–185 (YVCPEPTCVHHDPARALGDLTGIKKHFSRKH). 2 consecutive short sequence motifs (nuclear localization signal) follow at residues 123-130 (HRRGHNLP) and 177-184 (IKKHFSRK). Residues 190-213 (WRCERCGKRYAVHSDWKAHVKNCG) form a C2H2-type 2; degenerate zinc finger. Positions 192, 195, 208, 212, 219, 221, 234, and 238 each coordinate Zn(2+). The segment at 217-240 (YRCDCGILFSRKDSLLTHRAFCDA) adopts a CCHC-type 2; atypical zinc-finger fold. The interval 227-239 (RKDSLLTHRAFCD) is SHR-binding.

In terms of tissue distribution, mostly expressed in developing leaves (more in sheaths than in blades, especially in the outer epidermal cell of immature leaves and in the region immediately beneath the meristem where internodes are visible) and panicles, and, at very low levels, around the shoot apex and in roots.

It is found in the nucleus. Its function is as follows. Transcription activator that acts as a flowering master switch in both long and short days, independently of the circadian clock. Promotes flowering upstream of HD1 by up-regulating FTL1, FTL4, FTL5, FTL6, EHD1, HD3A and RFT1. Seems to repress FTL11 expression. May recognize the consensus motif 5'-TTTGTCGTAAT-3' in target gene promoters. This Oryza sativa subsp. japonica (Rice) protein is Protein EARLY HEADING DATE 2.